The chain runs to 272 residues: Shikimate dehydrogenase (NADP(+)) (272 aa).

Residues 14 to 16 and T61 contribute to the shikimate site; that span reads SKS. K65 (proton acceptor) is an active-site residue. E77 lines the NADP(+) pocket. N86 and D102 together coordinate shikimate. NADP(+) contacts are provided by residues 126 to 130, 150 to 155, and M213; these read GAGGA and NRTFSK. Residue Y215 participates in shikimate binding. G237 contacts NADP(+).

It belongs to the shikimate dehydrogenase family. In terms of assembly, homodimer.

The catalysed reaction is shikimate + NADP(+) = 3-dehydroshikimate + NADPH + H(+). The protein operates within metabolic intermediate biosynthesis; chorismate biosynthesis; chorismate from D-erythrose 4-phosphate and phosphoenolpyruvate: step 4/7. Involved in the biosynthesis of the chorismate, which leads to the biosynthesis of aromatic amino acids. Catalyzes the reversible NADPH linked reduction of 3-dehydroshikimate (DHSA) to yield shikimate (SA). In Psychromonas ingrahamii (strain DSM 17664 / CCUG 51855 / 37), this protein is Shikimate dehydrogenase (NADP(+)).